The chain runs to 822 residues: Endonuclease MutS2 (822 aa).

Residue 348-355 (GPNTGGKT) coordinates ATP. Residues 707 to 737 (SLNGKKVEPPPKSEPVPKKVKAEPPATEAKS) are disordered. The span at 709-728 (NGKKVEPPPKSEPVPKKVKA) shows a compositional bias: basic and acidic residues. Residues 749–822 (LDCRGDRLER…GAGVTIAYLR (74 aa)) enclose the Smr domain.

Belongs to the DNA mismatch repair MutS family. MutS2 subfamily. In terms of assembly, homodimer. Binds to stalled ribosomes, contacting rRNA.

Its function is as follows. Endonuclease that is involved in the suppression of homologous recombination and thus may have a key role in the control of bacterial genetic diversity. Acts as a ribosome collision sensor, splitting the ribosome into its 2 subunits. Detects stalled/collided 70S ribosomes which it binds and splits by an ATP-hydrolysis driven conformational change. Acts upstream of the ribosome quality control system (RQC), a ribosome-associated complex that mediates the extraction of incompletely synthesized nascent chains from stalled ribosomes and their subsequent degradation. Probably generates substrates for RQC. The polypeptide is Endonuclease MutS2 (Synechocystis sp. (strain ATCC 27184 / PCC 6803 / Kazusa)).